We begin with the raw amino-acid sequence, 983 residues long: Probable beta-galactosidase C (983 aa).

An N-terminal signal peptide occupies residues 1–23 (MRIFSFLFLLLLGILTGQGLVSG). Residues tyrosine 82, asparagine 127, alanine 128, glutamate 129, and asparagine 187 each coordinate substrate. Residue glutamate 188 is the Proton donor of the active site. A glycan (N-linked (GlcNAc...) asparagine) is linked at asparagine 197. Tyrosine 251 is a binding site for substrate. Residues cysteine 257 and cysteine 304 are joined by a disulfide bond. N-linked (GlcNAc...) asparagine glycosylation occurs at asparagine 276. The Nucleophile role is filled by glutamate 287. Tyrosine 353 contributes to the substrate binding site. Residues asparagine 391, asparagine 434, asparagine 466, asparagine 516, asparagine 601, asparagine 676, asparagine 714, asparagine 719, and asparagine 804 are each glycosylated (N-linked (GlcNAc...) asparagine).

The protein belongs to the glycosyl hydrolase 35 family.

The protein resides in the secreted. The enzyme catalyses Hydrolysis of terminal non-reducing beta-D-galactose residues in beta-D-galactosides.. In terms of biological role, cleaves beta-linked terminal galactosyl residues from gangliosides, glycoproteins, and glycosaminoglycans. This is Probable beta-galactosidase C (lacC) from Neosartorya fischeri (strain ATCC 1020 / DSM 3700 / CBS 544.65 / FGSC A1164 / JCM 1740 / NRRL 181 / WB 181) (Aspergillus fischerianus).